A 155-amino-acid chain; its full sequence is Protein Smg homolog (155 aa).

The protein belongs to the Smg family.

In Azoarcus sp. (strain BH72), this protein is Protein Smg homolog.